The following is a 274-amino-acid chain: Proteasome subunit beta type-7-B (274 aa).

A propeptide spans 1–37 (MSQSSVDIPPKGGFSFDLCKRNDMLTQKGLKAPSFLK) (removed in mature form). Threonine 40 (nucleophile) is an active-site residue.

This sequence belongs to the peptidase T1B family. In terms of assembly, component of the 20S core complex of the 26S proteasome. The 26S proteasome is composed of a core protease (CP), known as the 20S proteasome, capped at one or both ends by the 19S regulatory particle (RP/PA700). The 20S proteasome core is composed of 28 subunits that are arranged in four stacked rings, resulting in a barrel-shaped structure. The two end rings are each formed by seven alpha subunits, and the two central rings are each formed by seven beta subunits. The catalytic chamber with the active sites is on the inside of the barrel.

It is found in the cytoplasm. The protein resides in the nucleus. The enzyme catalyses Cleavage of peptide bonds with very broad specificity.. The proteasome is a multicatalytic proteinase complex which is characterized by its ability to cleave peptides with Arg, Phe, Tyr, Leu, and Glu adjacent to the leaving group at neutral or slightly basic pH. The proteasome has an ATP-dependent proteolytic activity. The sequence is that of Proteasome subunit beta type-7-B (PBB2) from Arabidopsis thaliana (Mouse-ear cress).